The primary structure comprises 1095 residues: DNA-directed RNA polymerase subunit beta (1095 aa).

The interval 1069–1095 is disordered; the sequence is DLMQDVNPRRSTPSRPTYESLGKEYEE.

This sequence belongs to the RNA polymerase beta chain family. In cyanobacteria the RNAP catalytic core is composed of 2 alpha, 1 beta, 1 beta', 1 gamma and 1 omega subunit. When a sigma factor is associated with the core the holoenzyme is formed, which can initiate transcription.

It carries out the reaction RNA(n) + a ribonucleoside 5'-triphosphate = RNA(n+1) + diphosphate. Functionally, DNA-dependent RNA polymerase catalyzes the transcription of DNA into RNA using the four ribonucleoside triphosphates as substrates. The polypeptide is DNA-directed RNA polymerase subunit beta (Prochlorococcus marinus (strain NATL2A)).